The primary structure comprises 112 residues: Large ribosomal subunit protein uL24 (112 aa).

The tract at residues 92 to 112 (ERDGKQKTVRVRVSKSTGKDL) is disordered.

The protein belongs to the universal ribosomal protein uL24 family. As to quaternary structure, part of the 50S ribosomal subunit.

Its function is as follows. One of two assembly initiator proteins, it binds directly to the 5'-end of the 23S rRNA, where it nucleates assembly of the 50S subunit. One of the proteins that surrounds the polypeptide exit tunnel on the outside of the subunit. The protein is Large ribosomal subunit protein uL24 of Kocuria rhizophila (strain ATCC 9341 / DSM 348 / NBRC 103217 / DC2201).